An 85-amino-acid chain; its full sequence is Alpha-insect toxin Bot14 (85 aa).

The first 18 residues, Met-1–Gln-18, serve as a signal peptide directing secretion. An LCN-type CS-alpha/beta domain is found at Arg-20–His-84. Intrachain disulfides connect Cys-30–Cys-83, Cys-34–Cys-55, Cys-41–Cys-65, and Cys-45–Cys-67.

Belongs to the long (4 C-C) scorpion toxin superfamily. Sodium channel inhibitor family. Alpha subfamily. Expressed by the venom gland.

The protein localises to the secreted. In terms of biological role, alpha toxins bind voltage-independently at site-3 of sodium channels (Nav) and inhibit the inactivation of the activated channels, thereby blocking neuronal transmission. This toxin is active only on insects. The polypeptide is Alpha-insect toxin Bot14 (Buthus occitanus tunetanus (Common European scorpion)).